The sequence spans 356 residues: S-adenosylmethionine:tRNA ribosyltransferase-isomerase (356 aa).

Belongs to the QueA family. In terms of assembly, monomer.

It localises to the cytoplasm. It carries out the reaction 7-aminomethyl-7-carbaguanosine(34) in tRNA + S-adenosyl-L-methionine = epoxyqueuosine(34) in tRNA + adenine + L-methionine + 2 H(+). It participates in tRNA modification; tRNA-queuosine biosynthesis. Transfers and isomerizes the ribose moiety from AdoMet to the 7-aminomethyl group of 7-deazaguanine (preQ1-tRNA) to give epoxyqueuosine (oQ-tRNA). The protein is S-adenosylmethionine:tRNA ribosyltransferase-isomerase of Escherichia fergusonii (strain ATCC 35469 / DSM 13698 / CCUG 18766 / IAM 14443 / JCM 21226 / LMG 7866 / NBRC 102419 / NCTC 12128 / CDC 0568-73).